The chain runs to 301 residues: Multifunctional dioxygenase ausE (301 aa).

The substrate site is built by arginine 72 and glutamine 127. Positions 130 and 132 each coordinate Fe cation. Threonine 167 serves as a coordination point for substrate. Histidine 214 contributes to the Fe cation binding site. A substrate-binding site is contributed by arginine 226.

The protein belongs to the PhyH family. Homodimer. Requires Fe cation as cofactor.

The enzyme catalyses preaustinoid A1 + 2-oxoglutarate + O2 = preaustinoid A2 + succinate + CO2 + H2O. The catalysed reaction is preaustinoid A2 + 2-oxoglutarate + O2 = preaustinoid A3 + succinate + CO2 + H2O. It carries out the reaction berkeleyone A + 2-oxoglutarate + O2 = preaustinoid A + succinate + CO2 + H2O. The protein operates within secondary metabolite biosynthesis; terpenoid biosynthesis. Multifunctional dioxygenase; part of the gene cluster A that mediates the biosynthesis of the fungal meroterpenoid acetoxydehydroaustin. The first step of the pathway is the synthesis of 3,5-dimethylorsellinic acid by the polyketide synthase ausA. 3,5-dimethylorsellinic acid is then prenylated by the polyprenyl transferase ausN. Further epoxidation by the FAD-dependent monooxygenase ausM and cyclization by the probable terpene cyclase ausL lead to the formation of protoaustinoid A. Protoaustinoid A is then oxidized to spiro-lactone preaustinoid A3 by the combined action of the FAD-binding monooxygenases ausB and ausC, and the dioxygenase ausE. Acid-catalyzed keto-rearrangement and ring contraction of the tetraketide portion of preaustinoid A3 by ausJ lead to the formation of preaustinoid A4. The aldo-keto reductase ausK, with the help of ausH, is involved in the next step by transforming preaustinoid A4 into isoaustinone which is in turn hydroxylated by the P450 monooxygenase ausI to form austinolide. The cytochrome P450 monooxygenase ausG then modifies austinolide to austinol. Austinol is further acetylated to austin by the O-acetyltransferase ausP, which spontaneously changes to dehydroaustin. The cytochrome P450 monooxygenase then converts dehydroaustin is into 7-dehydrodehydroaustin. The hydroxylation catalyzed by ausR permits the second O-acetyltransferase ausQ to add an additional acetyl group to the molecule, leading to the formation of acetoxydehydroaustin. Due to genetic rearrangements of the clusters and the subsequent loss of some enzymes, the end product of the Penicillium brasilianum austinoid biosynthesis clusters is acetoxydehydroaustin. The chain is Multifunctional dioxygenase ausE from Penicillium brasilianum.